The chain runs to 438 residues: Thymidine phosphorylase (438 aa).

This sequence belongs to the thymidine/pyrimidine-nucleoside phosphorylase family. In terms of assembly, homodimer.

The enzyme catalyses thymidine + phosphate = 2-deoxy-alpha-D-ribose 1-phosphate + thymine. Its pathway is pyrimidine metabolism; dTMP biosynthesis via salvage pathway; dTMP from thymine: step 1/2. The enzymes which catalyze the reversible phosphorolysis of pyrimidine nucleosides are involved in the degradation of these compounds and in their utilization as carbon and energy sources, or in the rescue of pyrimidine bases for nucleotide synthesis. This is Thymidine phosphorylase from Sinorhizobium medicae (strain WSM419) (Ensifer medicae).